Reading from the N-terminus, the 493-residue chain is MWSLIPLTAIVLVLVAILHRLFFHPLSHVPGPFLARFSSLYLHSICYLGIEATVLRQLHIKYKTKVLRVAPNSVSISDSEAVGEIYVRGGGFPKDDRYKNFNLGPIVSIFSSLDREYRDVRAKAVAPLFSPAQLRAESGPQGVIGGCIAEFVDQLRKSKEAGIGADLMDMCARLSIDVVTGYLLGQKYGGLQENAHLPPQERQSHKLSANPFIFSIVAFSRFSLLPHRIFQFLYSTSQRLSTNDEVTESFLKLDRFTNNVLEGTTAGEKVSEKPNGGYYHERLISQAGISRMEAAAQSQAVLFAGADSTAVMLATILFHLVQNGAARSRLLCEVRSDKPQDMRFLRAVVKEGLRLGMANPTRMTRVVPKSGPGLRVGDVLLSPGTIVGCAAYNLHHDPEVFPDPFTFRPERWLDDGTDRGLRRPGMEKSMIPFGVGSRACIGKNLAQQQLHDTVVAVIDSEVLEGARTCQERIEIIEWFNADIKGHHLDIKWS.

Helical transmembrane passes span 3–23 and 301–321; these read SLIPLTAIVLVLVAILHRLFF and VLFAGADSTAVMLATILFHLV. Position 440 (Cys-440) interacts with heme.

Belongs to the cytochrome P450 family. Heme serves as cofactor.

The protein localises to the membrane. Its pathway is secondary metabolite biosynthesis; terpenoid biosynthesis. Its function is as follows. Cytochrome P450 monooxygenase; part of the gene cluster that mediates the biosynthesis of the phthalide-terpenoid hybrid 11'-O-desmethylfendlerol. Within the pathway, mfmF catalyzes C-3 hydroxylation of 5-hydroxy-4-(hydroxymethyl)-7-methoxy-6-methylphthalide to yield cyclopolic acid. The biosynthesis of 11'-O-desmethylfendlerol begins with the NR-PKS mfmB that forms 3,5-dimethylorsellinic acid (DMOA), which is then transformed into the phthalide 5,7-dihydroxy-4-(hydroxymethyl)-6-methylphthalide by the cytochrome P450 monooxygenase mfmA and the hydrolase mfmC. Subsequently, the methyltransferase mfmE catalyzes 7-O-methylation to yield 5-hydroxy-4-(hydroxymethyl)-7-methoxy-6-methylphthalide, which undergoes C-3 hydroxylation by the cytochrome P450 monooxygenase mfmF. The resultant cyclopolic acid (2,5-dihydroxy-4-(hydroxymethyl)-7-methoxy-6-methylphthalide) is then farnesylated by the DMATS-type prenyltransferase mfmD to afford 5-O-farnesylcyclopolic acid. Finally, the Pyr4-family terpene cyclase mfmH cyclizes the farnesyl moiety of 5-O-farnesylcyclopolic acid into a drimane-like structure, thus completing the biosynthesis of 11'-O-desmethylfendlerol. This Annulohypoxylon moriforme (Filamentous fungus) protein is Cytochrome P450 monooxygenase mfmF.